Reading from the N-terminus, the 195-residue chain is N-terminal acetyltransferase B complex catalytic subunit NAT3 (195 aa).

Positions Thr2–Ala172 constitute an N-acetyltransferase domain.

Belongs to the acetyltransferase family. GNAT subfamily. As to quaternary structure, component of the N-terminal acetyltransferase B (NatB) complex, which is composed of NAT3 and MDM20.

It localises to the cytoplasm. The enzyme catalyses N-terminal L-methionyl-L-asparaginyl-[protein] + acetyl-CoA = N-terminal N(alpha)-acetyl-L-methionyl-L-asparaginyl-[protein] + CoA + H(+). It catalyses the reaction N-terminal L-methionyl-L-glutaminyl-[protein] + acetyl-CoA = N-terminal N(alpha)-acetyl-L-methionyl-L-glutaminyl-[protein] + CoA + H(+). It carries out the reaction N-terminal L-methionyl-L-aspartyl-[protein] + acetyl-CoA = N-terminal N(alpha)-acetyl-L-methionyl-L-aspartyl-[protein] + CoA + H(+). The catalysed reaction is N-terminal L-methionyl-L-glutamyl-[protein] + acetyl-CoA = N-terminal N(alpha)-acetyl-L-methionyl-L-glutamyl-[protein] + CoA + H(+). In terms of biological role, catalytic subunit of the NatB N-terminal acetyltransferase, which catalyzes acetylation of the amino-terminal methionine residues of all proteins beginning with Met-Asp or Met-Glu and of some proteins beginning with Met-Asn, Met-Gln or Met-Met. NatB acetylates TPM1 protein and regulates tropomyocin-actin interactions, it is presumed to N-acetylate 15% of all yeast proteins. This Saccharomyces cerevisiae (strain ATCC 204508 / S288c) (Baker's yeast) protein is N-terminal acetyltransferase B complex catalytic subunit NAT3.